The primary structure comprises 526 residues: DNA polymerase epsilon subunit B (526 aa).

It belongs to the DNA polymerase epsilon subunit B family. Subunit of the DNA polymerase II. Interacts with POL2A (via C-terminus).

Its subcellular location is the nucleus. Functionally, as accessory component of DNA polymerase II participates in chromosomal DNA replication. Required for the timing and determination of cell fate during plant embryogenesis and root pole development, by promoting cell cycle and cell type patterning. Necessary for proper shoot (SAM) and root apical meristem (RAM) functions. Is essential to promote the first divisions of the zygote. The sequence is that of DNA polymerase epsilon subunit B from Arabidopsis thaliana (Mouse-ear cress).